The sequence spans 292 residues: 4-hydroxy-tetrahydrodipicolinate synthase (292 aa).

Residue Thr-45 coordinates pyruvate. The active-site Proton donor/acceptor is the Tyr-133. The active-site Schiff-base intermediate with substrate is the Lys-161. Ile-203 provides a ligand contact to pyruvate.

The protein belongs to the DapA family. As to quaternary structure, homotetramer; dimer of dimers.

The protein resides in the cytoplasm. The catalysed reaction is L-aspartate 4-semialdehyde + pyruvate = (2S,4S)-4-hydroxy-2,3,4,5-tetrahydrodipicolinate + H2O + H(+). Its pathway is amino-acid biosynthesis; L-lysine biosynthesis via DAP pathway; (S)-tetrahydrodipicolinate from L-aspartate: step 3/4. Its function is as follows. Catalyzes the condensation of (S)-aspartate-beta-semialdehyde [(S)-ASA] and pyruvate to 4-hydroxy-tetrahydrodipicolinate (HTPA). The polypeptide is 4-hydroxy-tetrahydrodipicolinate synthase (Vibrio vulnificus (strain YJ016)).